The primary structure comprises 765 residues: MKEKSKNAARTRREKENSEFYELAKLLPLPSAITSQLDKASIIRLTTSYLKMRVVFPEGLGEAWGHTSRTSPLDNVGRELGSHLLQTLDGFIFVVAPDGKIMYISETASVHLGLSQVELTGNSIYEYIHPADHDEMTAVLTAHQPYHSHFVQEYEIERSFFLRMKCVLAKRNAGLTCGGYKVIHCSGYLKIRQYSLDMSPFDGCYQNVGLVAVGHSLPPSAVTEIKLHSNMFMFRASLDMKLIFLDSRVAELTGYEPQDLIEKTLYHHVHGCDTFHLRCAHHLLLVKGQVTTKYYRFLAKQGGWVWVQSYATIVHNSRSSRPHCIVSVNYVLTDTEYKGLQLSLDQISASKPTFSYTSSSTPTISDNRKGAKSRLSSSKSKSRTSPYPQYSGFHTERSESDHDSQWGGSPLTDTASPQLLDPERPGSQHELSCAYRQFPDRSSLCYGFALDHSRLVEDRHFHTQACEGGRCEAGRYFLGAPPTGRDPWWGSRAALPLTKASPESREAYENSMPHITSIHRIHGRGHWDEDSVVSSPDPGSASESGDRYRTEQYQNSPHEPSKIETLIRATQQMIKEEENRLQLRKAPPDQLASINGAGKKHSLCFANYQQPPPTGEVCHSSALASTSPCDHIQQREGKMLSPHENDYDNSPTALSRISSPSSDRITKSSLILAKDYLHSDMSPHQTAGDHPAISPNCFGSHRQYFDKHAYTLTGYALEHLYDSETIRNYSLGCNGSHFDVTSHLRMQPDPAQGHKGTSVIITNGS.

In terms of domain architecture, bHLH spans 1–53 (MKEKSKNAARTRREKENSEFYELAKLLPLPSAITSQLDKASIIRLTTSYLKMR). 2 consecutive PAS domains span residues 77–147 (GREL…QPYH) and 218–288 (PPSA…LVKG). In terms of domain architecture, PAC spans 292–335 (TKYYRFLAKQGGWVWVQSYATIVHNSRSSRPHCIVSVNYVLTDT). Positions 336–765 (EYKGLQLSLD…GTSVIITNGS (430 aa)) constitute a Single-minded C-terminal domain. Low complexity-rich tracts occupy residues 352 to 365 (PTFS…PTIS) and 373 to 385 (SRLS…SRTS). 2 disordered regions span residues 352 to 428 (PTFS…PGSQ) and 527 to 560 (WDED…PHEP). A Nuclear localization signal motif is present at residues 368–387 (RKGAKSRLSSSKSKSRTSPY). The span at 394–404 (HTERSESDHDS) shows a compositional bias: basic and acidic residues.

Efficient DNA binding requires dimerization with another bHLH protein. Heterodimer; forms a heterodimer with ARNT, ARNT2. Detected in lung, skeletal muscle and kidney. During fetal development it is found in the CNS, developing kidney, mesodermal and endodermal tissues, including developing somites, mesonephric duct, and foregut.

It localises to the nucleus. Its function is as follows. Transcriptional factor that may have pleiotropic effects during embryogenesis and in the adult. This is Single-minded homolog 1 (Sim1) from Mus musculus (Mouse).